The sequence spans 238 residues: Ribonuclease PH (238 aa).

Residues Arg86 and 124–126 (GTR) contribute to the phosphate site.

It belongs to the RNase PH family. Homohexameric ring arranged as a trimer of dimers.

The enzyme catalyses tRNA(n+1) + phosphate = tRNA(n) + a ribonucleoside 5'-diphosphate. In terms of biological role, phosphorolytic 3'-5' exoribonuclease that plays an important role in tRNA 3'-end maturation. Removes nucleotide residues following the 3'-CCA terminus of tRNAs; can also add nucleotides to the ends of RNA molecules by using nucleoside diphosphates as substrates, but this may not be physiologically important. Probably plays a role in initiation of 16S rRNA degradation (leading to ribosome degradation) during starvation. In Salmonella gallinarum (strain 287/91 / NCTC 13346), this protein is Ribonuclease PH.